The sequence spans 420 residues: Glutamyl-tRNA reductase (420 aa).

Residues 49–52 (TCNR), S107, 112–114 (EPQ), and Q118 each bind substrate. C50 functions as the Nucleophile in the catalytic mechanism. Position 187-192 (187-192 (GAGETI)) interacts with NADP(+).

This sequence belongs to the glutamyl-tRNA reductase family. As to quaternary structure, homodimer.

The catalysed reaction is (S)-4-amino-5-oxopentanoate + tRNA(Glu) + NADP(+) = L-glutamyl-tRNA(Glu) + NADPH + H(+). The protein operates within porphyrin-containing compound metabolism; protoporphyrin-IX biosynthesis; 5-aminolevulinate from L-glutamyl-tRNA(Glu): step 1/2. In terms of biological role, catalyzes the NADPH-dependent reduction of glutamyl-tRNA(Glu) to glutamate 1-semialdehyde (GSA). This Nitrosococcus oceani (strain ATCC 19707 / BCRC 17464 / JCM 30415 / NCIMB 11848 / C-107) protein is Glutamyl-tRNA reductase.